The following is a 503-amino-acid chain: Probable cytosol aminopeptidase (503 aa).

Residues K270 and D275 each coordinate Mn(2+). K282 is an active-site residue. 3 residues coordinate Mn(2+): D293, D352, and E354. R356 is an active-site residue.

The protein belongs to the peptidase M17 family. Requires Mn(2+) as cofactor.

It is found in the cytoplasm. It catalyses the reaction Release of an N-terminal amino acid, Xaa-|-Yaa-, in which Xaa is preferably Leu, but may be other amino acids including Pro although not Arg or Lys, and Yaa may be Pro. Amino acid amides and methyl esters are also readily hydrolyzed, but rates on arylamides are exceedingly low.. The catalysed reaction is Release of an N-terminal amino acid, preferentially leucine, but not glutamic or aspartic acids.. Functionally, presumably involved in the processing and regular turnover of intracellular proteins. Catalyzes the removal of unsubstituted N-terminal amino acids from various peptides. In Yersinia pseudotuberculosis serotype O:1b (strain IP 31758), this protein is Probable cytosol aminopeptidase.